The primary structure comprises 159 residues: MIAIYPGRFDPVTLGHLSVARRASGFCDRLIIAVFDNPAKPGLFTAAERVDFIKQSIKDLPNVEVRSFSGLMVNFARKMGASLIIRGLRVGADFEREMEMYVMNRRLDEGIELCCLFSEPQYQYLSASLIKEIVILGGDSSGLISEHVAVALKNKLASV.

H16 provides a ligand contact to ATP. Substrate is bound by residues K40, M72, and R86. Residues 87 to 89 (GLR), E97, and 122 to 128 (YQYLSAS) each bind ATP.

Belongs to the bacterial CoaD family. In terms of assembly, homohexamer. Mg(2+) is required as a cofactor.

Its subcellular location is the cytoplasm. It carries out the reaction (R)-4'-phosphopantetheine + ATP + H(+) = 3'-dephospho-CoA + diphosphate. It functions in the pathway cofactor biosynthesis; coenzyme A biosynthesis; CoA from (R)-pantothenate: step 4/5. Reversibly transfers an adenylyl group from ATP to 4'-phosphopantetheine, yielding dephospho-CoA (dPCoA) and pyrophosphate. This is Phosphopantetheine adenylyltransferase from Dehalococcoides mccartyi (strain ATCC BAA-2100 / JCM 16839 / KCTC 5957 / BAV1).